The sequence spans 317 residues: Transaldolase (317 aa).

K132 functions as the Schiff-base intermediate with substrate in the catalytic mechanism.

Belongs to the transaldolase family. Type 1 subfamily. Homodimer.

The protein resides in the cytoplasm. The catalysed reaction is D-sedoheptulose 7-phosphate + D-glyceraldehyde 3-phosphate = D-erythrose 4-phosphate + beta-D-fructose 6-phosphate. It participates in carbohydrate degradation; pentose phosphate pathway; D-glyceraldehyde 3-phosphate and beta-D-fructose 6-phosphate from D-ribose 5-phosphate and D-xylulose 5-phosphate (non-oxidative stage): step 2/3. Functionally, transaldolase is important for the balance of metabolites in the pentose-phosphate pathway. This is Transaldolase from Histophilus somni (strain 2336) (Haemophilus somnus).